The chain runs to 376 residues: Response regulator aspartate phosphatase H (376 aa).

TPR repeat units follow at residues 99–132, 139–172, 180–213, 220–253, 259–292, and 334–367; these read YYSL…LPFV, AEFH…YQNH, IQSL…AMDI, AISL…SREK, PKVL…ITAR, and EACA…QEDI.

The protein belongs to the Rap family. As to quaternary structure, homodimer. Interacts with phosphorylated Spo0F. Each RapH protomer is bound to a monomer of Spo0F, forming a heterotetrameric complex. May also interact with non-phosphorylated Spo0F to inhibit the sporulation phosphorelay. Interacts with the C-terminal DNA-binding region of ComA. Does not interact with DegU.

The protein localises to the cytoplasm. Both activities are inhibited by RapH. Dual specificity regulatory protein that can control both sporulation and competence by acting on two distinct response regulators: Spo0F and ComA, respectively. Is involved in the temporal separation of competence and sporulation. Acts as a phosphatase that specifically dephosphorylates the sporulation initiation phosphotransferase Spo0F and inhibits its activity. RapH can also antagonize sporulation by sterically blocking phosphoryl transfer to and from Spo0F. In addition, inhibits the activity of ComA, a transcriptional factor that regulates the development of genetic competence. Acts by binding to ComA, leading to the inhibition of its DNA-binding activity. The protein is Response regulator aspartate phosphatase H (rapH) of Bacillus subtilis (strain 168).